Reading from the N-terminus, the 278-residue chain is MKFAKGHGTENDFVIVEGTGPLPPEKVVALCDRRAGIGADGVLRIIRAGELLASGEIDELAPGINADDWFMDYRNADGSVAEMCGNGTRVFAHWVRSRGLLEEDTFTVGTRAGAKQVTVHSFSETEAEVSVEMGPAQVLGVSTASMAGESFAGLGVDMGNPHLAAVIPGLTAEDLAAKRLEQPVFDADFFPAGVNVELVTPLCDGVIHMRVFERGSGETRSCGTGTVAAACAALADASQVTGHVRVIVPGGEVEVEITEDGSTLTGPSRIVATGETSL.

Residues Asn-11 and Asn-75 each contribute to the substrate site. Cys-84 functions as the Proton donor in the catalytic mechanism. Substrate-binding positions include Gly-85–Asn-86, Asn-160, Asn-195, and Glu-213–Arg-214. Residue Cys-222 is the Proton acceptor of the active site. Gly-223–Thr-224 provides a ligand contact to substrate.

This sequence belongs to the diaminopimelate epimerase family. Homodimer.

The protein localises to the cytoplasm. The catalysed reaction is (2S,6S)-2,6-diaminopimelate = meso-2,6-diaminopimelate. Its pathway is amino-acid biosynthesis; L-lysine biosynthesis via DAP pathway; DL-2,6-diaminopimelate from LL-2,6-diaminopimelate: step 1/1. Catalyzes the stereoinversion of LL-2,6-diaminopimelate (L,L-DAP) to meso-diaminopimelate (meso-DAP), a precursor of L-lysine and an essential component of the bacterial peptidoglycan. This Corynebacterium aurimucosum (strain ATCC 700975 / DSM 44827 / CIP 107346 / CN-1) (Corynebacterium nigricans) protein is Diaminopimelate epimerase.